A 91-amino-acid chain; its full sequence is MLEFISRMLGKEPASKNVAKERLRLVLVHDRATISPHMLNQLKEDLIKVISNYMEIDEGALEVNLNQDDREVALIANIPVIKMKRDYSVKG.

Belongs to the MinE family.

Its function is as follows. Prevents the cell division inhibition by proteins MinC and MinD at internal division sites while permitting inhibition at polar sites. This ensures cell division at the proper site by restricting the formation of a division septum at the midpoint of the long axis of the cell. This chain is Cell division topological specificity factor, found in Desulfitobacterium hafniense (strain DSM 10664 / DCB-2).